A 429-amino-acid polypeptide reads, in one-letter code: Glutamate-1-semialdehyde 2,1-aminomutase (429 aa).

Position 264 is an N6-(pyridoxal phosphate)lysine (lysine 264).

This sequence belongs to the class-III pyridoxal-phosphate-dependent aminotransferase family. HemL subfamily. Homodimer. The cofactor is pyridoxal 5'-phosphate.

It localises to the cytoplasm. The catalysed reaction is (S)-4-amino-5-oxopentanoate = 5-aminolevulinate. Its pathway is porphyrin-containing compound metabolism; protoporphyrin-IX biosynthesis; 5-aminolevulinate from L-glutamyl-tRNA(Glu): step 2/2. In Campylobacter curvus (strain 525.92), this protein is Glutamate-1-semialdehyde 2,1-aminomutase.